Consider the following 257-residue polypeptide: Deoxyribose-phosphate aldolase (257 aa).

Asp102 functions as the Proton donor/acceptor in the catalytic mechanism. Lys166 (schiff-base intermediate with acetaldehyde) is an active-site residue. Lys198 (proton donor/acceptor) is an active-site residue.

It belongs to the DeoC/FbaB aldolase family. DeoC type 2 subfamily.

Its subcellular location is the cytoplasm. It catalyses the reaction 2-deoxy-D-ribose 5-phosphate = D-glyceraldehyde 3-phosphate + acetaldehyde. The protein operates within carbohydrate degradation; 2-deoxy-D-ribose 1-phosphate degradation; D-glyceraldehyde 3-phosphate and acetaldehyde from 2-deoxy-alpha-D-ribose 1-phosphate: step 2/2. Catalyzes a reversible aldol reaction between acetaldehyde and D-glyceraldehyde 3-phosphate to generate 2-deoxy-D-ribose 5-phosphate. The sequence is that of Deoxyribose-phosphate aldolase from Shewanella piezotolerans (strain WP3 / JCM 13877).